The chain runs to 362 residues: 11-beta-hydroxysteroid dehydrogenase B (362 aa).

A helical; Signal-anchor for type II membrane protein transmembrane segment spans residues 10 to 30; the sequence is FVVPPASLLMLAFTWPTLFFI. Residues 13 to 26 carry the Proline-knob motif; the sequence is PPASLLMLAFTWPT. NADP(+) is bound at residue 55–81; the sequence is GASSGIGEQIAYQYAKRGANLVLVARR. A substrate-binding site is contributed by Ser185. The active-site Proton acceptor is the Tyr198. Residues 198–202 and Lys202 contribute to the NADP(+) site; that span reads YSAAK. The disordered stretch occupies residues 321 to 362; the sequence is TGRPLLETSSPRRSAVMEGSSPRRLPPGPLTFSPAFQQQKSE.

It belongs to the short-chain dehydrogenases/reductases (SDR) family. As to expression, expressed in seeds (at protein level). Not expressed in stem, leaf or root (at protein level).

It is found in the lipid droplet. The protein localises to the membrane. It carries out the reaction an 11beta-hydroxysteroid + NADP(+) = an 11-oxosteroid + NADPH + H(+). It catalyses the reaction corticosterone + NADP(+) = 11-dehydrocorticosterone + NADPH + H(+). The enzyme catalyses 17beta-estradiol + NADP(+) = estrone + NADPH + H(+). Its function is as follows. Has dehydrogenase activity against corticosterone (11 beta-hydroxysteroid) and estradiol (17 beta-hydroxysteroid), with similar activities to both sterols in the presence of NADP(+), but negligible activity to either sterol in the presence of NAD(+). May be involved in signal transduction regulated by various sterols. This chain is 11-beta-hydroxysteroid dehydrogenase B, found in Sesamum indicum (Oriental sesame).